A 181-amino-acid chain; its full sequence is Protein Abitram (181 aa).

It belongs to the ABITRAM family. In terms of assembly, interacts with F-actin. Interacts with G-actin.

It localises to the nucleus speckle. The protein localises to the cell projection. The protein resides in the lamellipodium. Its subcellular location is the nucleus. It is found in the growth cone. It localises to the dendrite. In terms of biological role, actin-binding protein that regulates actin polymerization, filopodia dynamics and increases the branching of proximal dendrites of developing neurons. The polypeptide is Protein Abitram (Homo sapiens (Human)).